The primary structure comprises 198 residues: Glycerol-3-phosphate acyltransferase 2 (198 aa).

4 consecutive transmembrane segments (helical) span residues 4 to 24, 71 to 91, 113 to 133, and 147 to 167; these read TYLL…LVVG, LPMV…AVLG, LLCY…TLLF, and VVAV…AMCL.

It belongs to the PlsY family. Probably interacts with PlsX.

The protein resides in the cell membrane. The catalysed reaction is an acyl phosphate + sn-glycerol 3-phosphate = a 1-acyl-sn-glycero-3-phosphate + phosphate. It functions in the pathway lipid metabolism; phospholipid metabolism. Its function is as follows. Catalyzes the transfer of an acyl group from acyl-phosphate (acyl-PO(4)) to glycerol-3-phosphate (G3P) to form lysophosphatidic acid (LPA). This enzyme utilizes acyl-phosphate as fatty acyl donor, but not acyl-CoA or acyl-ACP. This Bacillus cereus (strain ZK / E33L) protein is Glycerol-3-phosphate acyltransferase 2.